Consider the following 238-residue polypeptide: Uridylate kinase (238 aa).

Position 12-15 (12-15) interacts with ATP; that stretch reads KLSG. Residue G54 participates in UMP binding. G55 and R59 together coordinate ATP. UMP contacts are provided by residues D74 and 135–142; that span reads TGNPYFTT. Residues T162, N163, Y168, and D171 each contribute to the ATP site.

The protein belongs to the UMP kinase family. As to quaternary structure, homohexamer.

The protein localises to the cytoplasm. The catalysed reaction is UMP + ATP = UDP + ADP. It participates in pyrimidine metabolism; CTP biosynthesis via de novo pathway; UDP from UMP (UMPK route): step 1/1. Inhibited by UTP. Catalyzes the reversible phosphorylation of UMP to UDP. This is Uridylate kinase from Nitrobacter winogradskyi (strain ATCC 25391 / DSM 10237 / CIP 104748 / NCIMB 11846 / Nb-255).